Consider the following 118-residue polypeptide: Peptidyl-tRNA hydrolase (118 aa).

This sequence belongs to the PTH2 family.

It localises to the cytoplasm. It carries out the reaction an N-acyl-L-alpha-aminoacyl-tRNA + H2O = an N-acyl-L-amino acid + a tRNA + H(+). Functionally, the natural substrate for this enzyme may be peptidyl-tRNAs which drop off the ribosome during protein synthesis. This Thermococcus sibiricus (strain DSM 12597 / MM 739) protein is Peptidyl-tRNA hydrolase.